The sequence spans 653 residues: Transmembrane and coiled-coil domains protein 1 (653 aa).

Met-1 is subject to N-acetylmethionine. Disordered stretches follow at residues 1–35, 58–78, 112–165, and 204–227; these read MEPSGSEQLFEDPDPGGKSQDAEARKQTESEQKLS, HQRRRSSVSPHDVQQIQADPE, PPKM…APTS, and TSSAVASSTDGSIHTDSVDGTPDP. Residues 1–591 lie on the Cytoplasmic side of the membrane; sequence MEPSGSEQLF…ARNLLGKLIN (591 aa). Residues 20–34 are compositionally biased toward basic and acidic residues; sequence QDAEARKQTESEQKL. The span at 64-74 shows a compositional bias: polar residues; sequence SVSPHDVQQIQ. Residues 113-125 show a composition bias toward basic residues; it reads PKMKRGTSLHSRR. Polar residues predominate over residues 135 to 144; the sequence is PQINRKSGQE. The span at 153–165 shows a compositional bias: low complexity; that stretch reads RPRSSSTTDAPTS. The span at 204–218 shows a compositional bias: polar residues; it reads TSSAVASSTDGSIHT. A coiled-coil region spans residues 228–313; it reads QRTKAAIAHL…RKLREVEQNG (86 aa). Phosphoserine is present on residues Ser-382 and Ser-414. A disordered region spans residues 415–437; sequence PKYGSEEDCSSATSGSVGANSTT. Over residues 424–437 the composition is skewed to polar residues; the sequence is SSATSGSVGANSTT. Positions 458–576 form a coiled coil; it reads GFDALLHEIQ…QQQQVVQLEG (119 aa). 2 helical membrane passes run 592 to 612 and 625 to 645; these read ILLAVMAVLLVFVSTVANCVV and LFLVVFIAFLWKHWDALFSYV. Residues 646-653 lie on the Cytoplasmic side of the membrane; the sequence is ERFFSSPR.

It belongs to the TEX28 family. May form homodimers and heterodimers with TMCC2 or TMCC3 via the coiled-coil domains. Interacts with ribosomal proteins RPL4 and RPS6.

The protein resides in the endoplasmic reticulum membrane. In terms of biological role, endoplasmic reticulum membrane protein that promotes endoplasmic reticulum-associated endosome fission. Localizes to contact sites between the endoplasmic reticulum and endosomes and acts by promoting recruitment of the endoplasmic reticulum to endosome tubules for fission. Endosome membrane fission of early and late endosomes is essential to separate regions destined for lysosomal degradation from carriers to be recycled to the plasma membrane. This is Transmembrane and coiled-coil domains protein 1 from Homo sapiens (Human).